Here is a 323-residue protein sequence, read N- to C-terminus: UDP-glucuronate 4-epimerase (323 aa).

NAD(+) is bound at residue 11-13; it reads GFI. Tyr-152 functions as the Proton acceptor in the catalytic mechanism. Residue Lys-156 coordinates NAD(+).

This sequence belongs to the NAD(P)-dependent epimerase/dehydratase family. Requires NAD(+) as cofactor.

The catalysed reaction is UDP-alpha-D-glucuronate = UDP-alpha-D-galacturonate. In terms of biological role, catalyzes the interconversion of UDP-D-glucuronic acid (UDP-GlcA) and UDP-D-galacturonic acid (UDP-GalA). The sequence is that of UDP-glucuronate 4-epimerase from Thermodesulfobacterium geofontis (strain OPF15).